We begin with the raw amino-acid sequence, 595 residues long: Transketolase-like protein 1 (595 aa).

93–95 (GWP) lines the thiamine diphosphate pocket. D125, N155, and I157 together coordinate Mg(2+). Thiamine diphosphate is bound at residue N155. Residues K217, E339, and F365 each contribute to the thiamine diphosphate site. Residue E339 is the Proton donor of the active site. Positions 389 and 397 each coordinate substrate. A thiamine diphosphate-binding site is contributed by H401.

The protein belongs to the transketolase family. Homodimer. Requires Mg(2+) as cofactor. Ca(2+) serves as cofactor. The cofactor is Mn(2+). Co(2+) is required as a cofactor. It depends on thiamine diphosphate as a cofactor. Not expressed in the embryonic neocortex.

It localises to the cytoplasm. The catalysed reaction is D-sedoheptulose 7-phosphate + D-glyceraldehyde 3-phosphate = aldehydo-D-ribose 5-phosphate + D-xylulose 5-phosphate. Its function is as follows. Catalyzes the transfer of a two-carbon ketol group from a ketose donor to an aldose acceptor, via a covalent intermediate with the cofactor thiamine pyrophosphate. This chain is Transketolase-like protein 1, found in Mus musculus (Mouse).